The chain runs to 496 residues: MELVVKSVSPETLKTATLVVAIGEGRKLGVAAKQLDELSGGAISAVLKRGDLAGKVGQSLLLQSLPNLKAERVLLVGVGKEAELGDRPFRKIISGILTTLKGLGGSDATLALDEIVVKGRDSYGKTRLLAETLVDGGYIFDEFKSQKAEPRALKKITLLTIKAAQAEVERAVTHAQAIANGMSFTRDLGNLPPNICHPTFLGEQAKALGKEFKGLKVEVLDEKKIKELGMGSFYAVGQGSDQPPRLIVMQYNGGKKSEKPYALVGKGITFDTGGISLKPGLGMDEMKYDMGGAASVFGTLRAVLELKLPINLVCILACAENMPSGGATRPGDIVTTLSGQTVEILNTDAEGRLVLCDALTYAERFKPQAVIDIATLTGACIVALGSHTSGLLGNSDELIEQLLSAGKAADDRAWQLPLFDEYQEQLDSPFADIANIGGPKAGTITAACFLSRFAKNFNWAHLDIAGTAWTSGGKDKGATGRPVPLLTQYLLDRAKA.

Mn(2+) contacts are provided by K266 and D271. K278 is an active-site residue. D289, D348, and E350 together coordinate Mn(2+). R352 is an active-site residue.

Belongs to the peptidase M17 family. The cofactor is Mn(2+).

It is found in the cytoplasm. It carries out the reaction Release of an N-terminal amino acid, Xaa-|-Yaa-, in which Xaa is preferably Leu, but may be other amino acids including Pro although not Arg or Lys, and Yaa may be Pro. Amino acid amides and methyl esters are also readily hydrolyzed, but rates on arylamides are exceedingly low.. It catalyses the reaction Release of an N-terminal amino acid, preferentially leucine, but not glutamic or aspartic acids.. Its function is as follows. Presumably involved in the processing and regular turnover of intracellular proteins. Catalyzes the removal of unsubstituted N-terminal amino acids from various peptides. This is Probable cytosol aminopeptidase from Pseudomonas fluorescens (strain SBW25).